The primary structure comprises 992 residues: Protein translocase subunit SecA (992 aa).

Residues glutamine 86, 104-108 (GEGKT), and aspartate 535 contribute to the ATP site. Residues 885 to 910 (IAGGSSEVEQTRKPQRRTVQQIGRND) are disordered. Residues cysteine 912, cysteine 914, cysteine 923, and histidine 924 each coordinate Zn(2+). The tract at residues 965 to 992 (IDNGTLPAASPKTPRGRQPQAVPRGKKR) is disordered.

It belongs to the SecA family. Monomer and homodimer. Part of the essential Sec protein translocation apparatus which comprises SecA, SecYEG and auxiliary proteins SecDF. Other proteins may also be involved. Zn(2+) is required as a cofactor.

Its subcellular location is the cell membrane. It is found in the cytoplasm. The catalysed reaction is ATP + H2O + cellular proteinSide 1 = ADP + phosphate + cellular proteinSide 2.. Functionally, part of the Sec protein translocase complex. Interacts with the SecYEG preprotein conducting channel. Has a central role in coupling the hydrolysis of ATP to the transfer of proteins into and across the cell membrane, serving as an ATP-driven molecular motor driving the stepwise translocation of polypeptide chains across the membrane. This Chloroflexus aggregans (strain MD-66 / DSM 9485) protein is Protein translocase subunit SecA.